A 195-amino-acid chain; its full sequence is L-rhamnose-binding lectin CSL2 (195 aa).

SUEL-type lectin domains follow at residues 1–97 and 104–195; these read TRVV…YTCL and TCEG…YTCG.

Functionally, L-rhamnose binding lectin. Has hemagglutinating activity towards rabbit erythrocytes and human type B erythrocytes. Hemagglutinating activity is inhibited by smooth-type lipopolysaccharide (LPS) from S.flexneri 1A and E.coli K12, but not by rough-type LPS from S.flexneri, E.coli K12 and E.coli EH100. Agglutinates E.coli K12 and B.subtilis. The polypeptide is L-rhamnose-binding lectin CSL2 (Oncorhynchus keta (Chum salmon)).